A 92-amino-acid chain; its full sequence is Signal recognition particle 19 kDa protein (92 aa).

This sequence belongs to the SRP19 family. As to quaternary structure, part of the signal recognition particle protein translocation system, which is composed of SRP and FtsY. Archaeal SRP consists of a 7S RNA molecule of 300 nucleotides and two protein subunits: SRP54 and SRP19.

It localises to the cytoplasm. In terms of biological role, involved in targeting and insertion of nascent membrane proteins into the cytoplasmic membrane. Binds directly to 7S RNA and mediates binding of the 54 kDa subunit of the SRP. The sequence is that of Signal recognition particle 19 kDa protein from Haloarcula marismortui (strain ATCC 43049 / DSM 3752 / JCM 8966 / VKM B-1809) (Halobacterium marismortui).